We begin with the raw amino-acid sequence, 389 residues long: Sterol methyltransferase-like 1 (389 aa).

The helical transmembrane segment at 25–45 threads the bilayer; the sequence is IAAGVTAAVVIGGYIWIITEL.

Belongs to the class I-like SAM-binding methyltransferase superfamily. Erg6/SMT family.

Its subcellular location is the microsome membrane. Unable to convert squalene, botryococcene, cycloartenol, zymosterol or lanosterol to mono-, di-, tri- or tetramethylated derivatives. This Botryococcus braunii (Green alga) protein is Sterol methyltransferase-like 1 (SMT-1).